A 256-amino-acid chain; its full sequence is Short chain dehydrogenase adrF (256 aa).

6 residues coordinate NADP(+): Ile11, Asp57, Arg119, Tyr151, Lys155, and Val184. Tyr151 serves as the catalytic Proton acceptor. Catalysis depends on Lys155, which acts as the Lowers pKa of active site Tyr.

Belongs to the short-chain dehydrogenases/reductases (SDR) family.

It participates in secondary metabolite biosynthesis; terpenoid biosynthesis. Its function is as follows. Short chain dehydrogenase; part of the gene cluster that mediates the biosynthesis of andrastins, meroterpenoid compounds that exhibit inhibitory activity against ras farnesyltransferase, suggesting that they could be promising leads for antitumor agents. The first step of the pathway is the synthesis of 3,5-dimethylorsellinic acid (DMOA) by the polyketide synthase adrD via condensation of one acetyl-CoA starter unit with 3 malonyl-CoA units and 2 methylations. DMAO is then converted to farnesyl-DMAO by the prenyltransferase adrG. The methyltransferase adrK catalyzes the methylation of the carboxyl group of farnesyl-DMAO to farnesyl-DMAO methyl ester which is further converted to epoxyfarnesyl-DMAO methyl ester by the FAD-dependent monooxygenase adrH. The terpene cyclase adrI then catalyzes the carbon skeletal rearrangement to generate the andrastin E, the first compound in the pathway having the andrastin scaffold, with the tetracyclic ring system. The post-cyclization tailoring enzymes adrF, adrE, adrJ, and adrA, are involved in the conversion of andrastin E into andrastin A. The short chain dehydrogenase adrF is responsible for the oxidation of the C-3 a hydroxyl group of andrastin E to yield the corresponding ketone, andrastin D. The ketoreductase adrE stereoselectively reduces the carbonyl moiety to reverse the stereochemistry of the C-3 position to yield andrastin F. The acetyltransferase adrJ is the acetyltransferase that attaches the acetyl group to the C-3 hydroxyl group of andrastin F to yield andrastin C. Finally, the cytochrome P450 monooxygenase adrA catalyzes two sequential oxidation reactions of the C-23 methyl group, to generate the corresponding alcohol andrastin B, and aldehyde andrastin A. The polypeptide is Short chain dehydrogenase adrF (Penicillium roqueforti).